The chain runs to 53 residues: Conotoxin Ac4.3b (53 aa).

The propeptide occupies 1–11; the sequence is SDVRNAAVHER. Residue glutamine 12 is modified to Pyrrolidone carboxylic acid. Glutamate 14 carries the 4-carboxyglutamate modification. Serine 18 is a glycosylation site (O-linked (HexNAc...) serine). Proline 28, proline 33, and proline 48 each carry 4-hydroxyproline. The residue at position 48 (proline 48) is a Proline amide. Positions 49-53 are excised as a propeptide; sequence GRRND.

Belongs to the conotoxin A superfamily. Contains 3 disulfide bonds. As to expression, expressed by the venom duct.

It localises to the secreted. Probable neurotoxin with ion channel inhibitor activity. This is Conotoxin Ac4.3b from Conus achatinus (Little frog cone).